Consider the following 84-residue polypeptide: U1-theraphotoxin-Hs1a (84 aa).

Residues Met-1–Ala-22 form the signal peptide. A propeptide spanning residues Glu-23 to Leu-48 is cleaved from the precursor. 3 disulfides stabilise this stretch: Cys-51–Cys-65, Cys-55–Cys-76, and Cys-70–Cys-81.

It belongs to the neurotoxin 12 (Hwtx-2) family. 02 (Hwtx-2) subfamily. Expressed by the venom gland.

The protein localises to the secreted. Functionally, blocks neuromuscular transmission. Acts cooperatively to potentiate the activity of huwentoxin-I. Paralyzes locusts and kills mice following intracerebroventricular injection. This is U1-theraphotoxin-Hs1a from Cyriopagopus schmidti (Chinese bird spider).